A 352-amino-acid polypeptide reads, in one-letter code: Heat-inducible transcription repressor HrcA (352 aa).

The protein belongs to the HrcA family.

Negative regulator of class I heat shock genes (grpE-dnaK-dnaJ and groELS operons). Prevents heat-shock induction of these operons. This Thermosynechococcus vestitus (strain NIES-2133 / IAM M-273 / BP-1) protein is Heat-inducible transcription repressor HrcA.